The sequence spans 606 residues: NADH-ubiquinone oxidoreductase chain 5 (606 aa).

16 helical membrane passes run 1–21 (MNIF…PIIA), 38–58 (NIIS…IYSG), 87–107 (MIFV…SIWY), 114–134 (ITQF…LVTA), 140–160 (LFIG…WWYG), 171–191 (AILY…WFLS), 213–233 (LMGL…HPWL), 241–261 (TPVS…FLLI), 273–293 (AQTL…ICAL), 301–320 (IIAF…IGIN), 325–347 (AFLH…GSII), 366–386 (MPFT…MPFL), 409–429 (LLMT…MIFF), 457–477 (LLIG…PTTT), 488–508 (LMAL…SLAT), and 582–602 (GLIK…LLLL).

It belongs to the complex I subunit 5 family. Core subunit of respiratory chain NADH dehydrogenase (Complex I) which is composed of 45 different subunits.

The protein localises to the mitochondrion inner membrane. It carries out the reaction a ubiquinone + NADH + 5 H(+)(in) = a ubiquinol + NAD(+) + 4 H(+)(out). In terms of biological role, core subunit of the mitochondrial membrane respiratory chain NADH dehydrogenase (Complex I) which catalyzes electron transfer from NADH through the respiratory chain, using ubiquinone as an electron acceptor. Essential for the catalytic activity and assembly of complex I. The chain is NADH-ubiquinone oxidoreductase chain 5 (MT-ND5) from Rhinoceros unicornis (Greater Indian rhinoceros).